Consider the following 209-residue polypeptide: Probable peptide export ATP-binding protein YydI (209 aa).

The region spanning 1–207 (MNIANYTLKV…SVDKLIEVYI (207 aa)) is the ABC transporter domain. Position 33-40 (33-40 (GKNGVGKS)) interacts with ATP.

Belongs to the ABC transporter superfamily. As to quaternary structure, the complex is composed of two ATP-binding proteins (YydI), two transmembrane proteins (YydJ).

Suggested to be part of an ABC transporter complex YydIJ involved in export of the modified peptide YydF. Responsible for energy coupling to the transport system. This is Probable peptide export ATP-binding protein YydI (yydI) from Bacillus subtilis (strain 168).